An 860-amino-acid polypeptide reads, in one-letter code: Leucine--tRNA ligase (860 aa).

The 'HIGH' region signature appears at 42 to 52 (PYPSGRLHMGH). The 'KMSKS' region signature appears at 619–623 (KMSKS). Residue lysine 622 coordinates ATP.

This sequence belongs to the class-I aminoacyl-tRNA synthetase family.

It is found in the cytoplasm. It catalyses the reaction tRNA(Leu) + L-leucine + ATP = L-leucyl-tRNA(Leu) + AMP + diphosphate. This chain is Leucine--tRNA ligase, found in Salmonella agona (strain SL483).